A 191-amino-acid chain; its full sequence is Protein GrpE (191 aa).

It belongs to the GrpE family. Homodimer.

Its subcellular location is the cytoplasm. Participates actively in the response to hyperosmotic and heat shock by preventing the aggregation of stress-denatured proteins, in association with DnaK and GrpE. It is the nucleotide exchange factor for DnaK and may function as a thermosensor. Unfolded proteins bind initially to DnaJ; upon interaction with the DnaJ-bound protein, DnaK hydrolyzes its bound ATP, resulting in the formation of a stable complex. GrpE releases ADP from DnaK; ATP binding to DnaK triggers the release of the substrate protein, thus completing the reaction cycle. Several rounds of ATP-dependent interactions between DnaJ, DnaK and GrpE are required for fully efficient folding. The protein is Protein GrpE of Helicobacter pylori (strain P12).